Reading from the N-terminus, the 412-residue chain is DnaJ homolog subfamily A member 2 (412 aa).

The 63-residue stretch at 8 to 70 (KLYDILGVPP…EKRELYDRYG (63 aa)) folds into the J domain. At Lys39 the chain carries N6-acetyllysine. Phosphoserine occurs at positions 78 and 123. The CR-type zinc-finger motif lies at 130-214 (GKTTKLQLSK…CEGKKVIKEV (85 aa)). Lys134 participates in a covalent cross-link: Glycyl lysine isopeptide (Lys-Gly) (interchain with G-Cter in SUMO2). Residues Cys143 and Cys146 each coordinate Zn(2+). A CXXCXGXG motif repeat occupies 143–150 (CSACSGQG). Lys152 carries the N6-acetyllysine modification. The Zn(2+) site is built by Cys159, Cys162, Cys186, Cys189, Cys202, and Cys205. 3 CXXCXGXG motif repeats span residues 159–166 (CSACRGRG), 186–193 (CSDCNGEG), and 202–209 (CKKCEGKK). The segment at 359 to 412 (PEVPNIIGDTEEVELQEFDSTRGSGGGQRREAYNDSSDEESSSHHGPGVQCAHQ) is disordered. Tyr391 carries the phosphotyrosine modification. Phosphoserine is present on residues Ser394 and Ser395. Cys409 carries the post-translational modification Cysteine methyl ester. A lipid anchor (S-farnesyl cysteine) is attached at Cys409. The propeptide at 410–412 (AHQ) is removed in mature form.

Its subcellular location is the membrane. In terms of biological role, co-chaperone of Hsc70. Stimulates ATP hydrolysis and the folding of unfolded proteins mediated by HSPA1A/B (in vitro). This Bos taurus (Bovine) protein is DnaJ homolog subfamily A member 2 (DNAJA2).